A 61-amino-acid polypeptide reads, in one-letter code: MPQLNPAPWFMILSSTWLIYTIILQPKILSHLPTNNPTNKNNKINTNSWTWPWTQHSSTNS.

The helical transmembrane segment at 10–32 (FMILSSTWLIYTIILQPKILSHL) threads the bilayer.

Belongs to the ATPase protein 8 family. In terms of assembly, component of the ATP synthase complex composed at least of ATP5F1A/subunit alpha, ATP5F1B/subunit beta, ATP5MC1/subunit c (homooctomer), MT-ATP6/subunit a, MT-ATP8/subunit 8, ATP5ME/subunit e, ATP5MF/subunit f, ATP5MG/subunit g, ATP5MK/subunit k, ATP5MJ/subunit j, ATP5F1C/subunit gamma, ATP5F1D/subunit delta, ATP5F1E/subunit epsilon, ATP5PF/subunit F6, ATP5PB/subunit b, ATP5PD/subunit d, ATP5PO/subunit OSCP. ATP synthase complex consists of a soluble F(1) head domain (subunits alpha(3) and beta(3)) - the catalytic core - and a membrane F(0) domain - the membrane proton channel (subunits c, a, 8, e, f, g, k and j). These two domains are linked by a central stalk (subunits gamma, delta, and epsilon) rotating inside the F1 region and a stationary peripheral stalk (subunits F6, b, d, and OSCP).

Its subcellular location is the mitochondrion membrane. Subunit 8, of the mitochondrial membrane ATP synthase complex (F(1)F(0) ATP synthase or Complex V) that produces ATP from ADP in the presence of a proton gradient across the membrane which is generated by electron transport complexes of the respiratory chain. ATP synthase complex consist of a soluble F(1) head domain - the catalytic core - and a membrane F(1) domain - the membrane proton channel. These two domains are linked by a central stalk rotating inside the F(1) region and a stationary peripheral stalk. During catalysis, ATP synthesis in the catalytic domain of F(1) is coupled via a rotary mechanism of the central stalk subunits to proton translocation. In vivo, can only synthesize ATP although its ATP hydrolase activity can be activated artificially in vitro. Part of the complex F(0) domain. In Chelonia mydas (Green sea-turtle), this protein is ATP synthase F(0) complex subunit 8.